Consider the following 409-residue polypeptide: Elongation factor Tu (409 aa).

The region spanning 10-214 is the tr-type G domain; it reads KPHVNIGTIG…EVDAYIPTPE (205 aa). The segment at 19-26 is G1; sequence GHVDHGKT. Residue 19–26 coordinates GTP; sequence GHVDHGKT. Mg(2+) is bound at residue Thr26. The interval 60–64 is G2; sequence GITIN. The tract at residues 81-84 is G3; sequence DCPG. GTP contacts are provided by residues 81–85 and 136–139; these read DCPGH and NKQD. The G4 stretch occupies residues 136-139; the sequence is NKQD. The interval 174 to 176 is G5; sequence SAL.

Belongs to the TRAFAC class translation factor GTPase superfamily. Classic translation factor GTPase family. EF-Tu/EF-1A subfamily. Monomer.

Its subcellular location is the cytoplasm. The catalysed reaction is GTP + H2O = GDP + phosphate + H(+). Its function is as follows. GTP hydrolase that promotes the GTP-dependent binding of aminoacyl-tRNA to the A-site of ribosomes during protein biosynthesis. This is Elongation factor Tu from Acaryochloris marina (strain MBIC 11017).